The following is a 130-amino-acid chain: uncharacterized protein (130 aa).

The protein belongs to the thioester dehydratase family. FabZ subfamily.

This is an uncharacterized protein from Bacillus subtilis (strain 168).